We begin with the raw amino-acid sequence, 800 residues long: Ion-translocating oxidoreductase complex subunit C (800 aa).

2 consecutive 4Fe-4S ferredoxin-type domains span residues 367 to 398 (DEFS…QQLY) and 408 to 437 (KARG…VQYY). [4Fe-4S] cluster is bound by residues Cys378, Cys381, Cys384, Cys388, Cys417, Cys420, Cys423, and Cys427. Low complexity-rich tracts occupy residues 536–553 (GATP…APAP), 571–583 (AKQA…PAAT), 599–617 (AAIA…APAA), 647–667 (AKQA…ADPA), and 675–690 (AAIA…KQAA). 3 disordered regions span residues 536 to 558 (GATP…DDPR), 571 to 631 (AKQA…QDDP), and 647 to 706 (AKQA…ENTD). Positions 693 to 705 (HATTEPVTVQENT) are enriched in polar residues.

The protein belongs to the 4Fe4S bacterial-type ferredoxin family. RnfC subfamily. In terms of assembly, the complex is composed of six subunits: RnfA, RnfB, RnfC, RnfD, RnfE and RnfG. Requires [4Fe-4S] cluster as cofactor.

Its subcellular location is the cell inner membrane. Its function is as follows. Part of a membrane-bound complex that couples electron transfer with translocation of ions across the membrane. The chain is Ion-translocating oxidoreductase complex subunit C from Edwardsiella ictaluri (strain 93-146).